The sequence spans 294 residues: 4-hydroxy-tetrahydrodipicolinate synthase (294 aa).

Pyruvate is bound at residue T44. The active-site Proton donor/acceptor is the Y132. The active-site Schiff-base intermediate with substrate is K160. I205 serves as a coordination point for pyruvate.

Belongs to the DapA family. In terms of assembly, homotetramer; dimer of dimers.

The protein resides in the cytoplasm. The enzyme catalyses L-aspartate 4-semialdehyde + pyruvate = (2S,4S)-4-hydroxy-2,3,4,5-tetrahydrodipicolinate + H2O + H(+). It participates in amino-acid biosynthesis; L-lysine biosynthesis via DAP pathway; (S)-tetrahydrodipicolinate from L-aspartate: step 3/4. Catalyzes the condensation of (S)-aspartate-beta-semialdehyde [(S)-ASA] and pyruvate to 4-hydroxy-tetrahydrodipicolinate (HTPA). This chain is 4-hydroxy-tetrahydrodipicolinate synthase, found in Kosmotoga olearia (strain ATCC BAA-1733 / DSM 21960 / TBF 19.5.1).